A 709-amino-acid polypeptide reads, in one-letter code: Methylmalonyl-CoA mutase (709 aa).

Residues 73–77, 183–185, Arg195, Lys222, His232, and 271–273 each bind substrate; these read TIRQY, TIQ, and RLS. The region spanning 579–709 is the B12-binding domain; that stretch reads RPRMLVVKMG…ILDLIREARS (131 aa). His592 provides a ligand contact to adenosylcob(III)alamin.

Belongs to the methylmalonyl-CoA mutase family. As to quaternary structure, homodimer. Adenosylcob(III)alamin serves as cofactor.

It catalyses the reaction (R)-methylmalonyl-CoA = succinyl-CoA. It functions in the pathway metabolic intermediate metabolism; propanoyl-CoA degradation; succinyl-CoA from propanoyl-CoA: step 3/3. Functionally, radical enzyme that catalyzes the transformation of (2R)-methylmalonyl-CoA to succinyl-CoA. Is involved in the ethylmalonyl-CoA pathway for acetyl-CoA assimilation required for R.sphaeroides growth on acetate as sole carbon source. The protein is Methylmalonyl-CoA mutase of Cereibacter sphaeroides (strain ATCC 17023 / DSM 158 / JCM 6121 / CCUG 31486 / LMG 2827 / NBRC 12203 / NCIMB 8253 / ATH 2.4.1.) (Rhodobacter sphaeroides).